The primary structure comprises 553 residues: CTP synthase (553 aa).

The tract at residues 1–277 (MPTEPETDYD…DQYVMEELDI (277 aa)) is amidoligase domain. A CTP-binding site is contributed by serine 26. Serine 26 is a UTP binding site. ATP contacts are provided by residues 27-32 (GLGKGI) and aspartate 84. The Mg(2+) site is built by aspartate 84 and glutamate 152. CTP-binding positions include 159-161 (DIE), 198-203 (KTKPTQ), and lysine 234. UTP-binding positions include 198-203 (KTKPTQ) and lysine 234. Residue valine 252 coordinates ATP. The Glutamine amidotransferase type-1 domain maps to 307–544 (LVGKYDLEDA…LEAVLGDDPH (238 aa)). Position 364 (glycine 364) interacts with L-glutamine. The active-site Nucleophile; for glutamine hydrolysis is the cysteine 391. Residues 392–395 (LGFQ), glutamate 415, and arginine 472 contribute to the L-glutamine site. Catalysis depends on residues histidine 517 and glutamate 519.

This sequence belongs to the CTP synthase family. As to quaternary structure, homotetramer.

The protein resides in the cytoplasm. The catalysed reaction is UTP + L-glutamine + ATP + H2O = CTP + L-glutamate + ADP + phosphate + 2 H(+). The enzyme catalyses L-glutamine + H2O = L-glutamate + NH4(+). It carries out the reaction UTP + NH4(+) + ATP = CTP + ADP + phosphate + 2 H(+). Its pathway is pyrimidine metabolism; CTP biosynthesis via de novo pathway; CTP from UDP: step 2/2. Allosterically activated by GTP, when glutamine is the substrate; GTP has no effect on the reaction when ammonia is the substrate. The allosteric effector GTP functions by stabilizing the protein conformation that binds the tetrahedral intermediate(s) formed during glutamine hydrolysis. Inhibited by the product CTP, via allosteric rather than competitive inhibition. Inhibited by 6-diazo-5-oxo-l-norleucine (DON). In terms of biological role, catalyzes the ATP-dependent amination of UTP to CTP with either L-glutamine or ammonia as the source of nitrogen. Regulates intracellular CTP levels through interactions with the four ribonucleotide triphosphates. The sequence is that of CTP synthase from Haloarcula hispanica (strain ATCC 33960 / DSM 4426 / JCM 8911 / NBRC 102182 / NCIMB 2187 / VKM B-1755).